The sequence spans 131 residues: uncharacterized protein (131 aa).

A disordered region spans residues Gly-60–Ala-100. Polar residues predominate over residues Arg-91–Ala-100.

This is an uncharacterized protein from Homo sapiens (Human).